The primary structure comprises 189 residues: Putative manganese efflux pump MntP (189 aa).

6 helical membrane-spanning segments follow: residues 3 to 23, 41 to 61, 62 to 82, 104 to 124, 132 to 152, and 168 to 188; these read PVAT…AAIG, LIFG…GKAA, AQYV…VLGA, FWLL…VGAG, IYST…IGVM, and AGGI…LNIF.

Belongs to the MntP (TC 9.B.29) family.

It is found in the cell inner membrane. In terms of biological role, probably functions as a manganese efflux pump. In Paraburkholderia phytofirmans (strain DSM 17436 / LMG 22146 / PsJN) (Burkholderia phytofirmans), this protein is Putative manganese efflux pump MntP.